A 704-amino-acid polypeptide reads, in one-letter code: Elongation factor G (704 aa).

Residues 8–291 form the tr-type G domain; the sequence is DKVRNIGIMA…AVVDYLASPL (284 aa). GTP is bound by residues 17–24, 90–94, and 144–147; these read AHIDAGKT, DTPGH, and NKMD.

It belongs to the TRAFAC class translation factor GTPase superfamily. Classic translation factor GTPase family. EF-G/EF-2 subfamily.

The protein localises to the cytoplasm. Catalyzes the GTP-dependent ribosomal translocation step during translation elongation. During this step, the ribosome changes from the pre-translocational (PRE) to the post-translocational (POST) state as the newly formed A-site-bound peptidyl-tRNA and P-site-bound deacylated tRNA move to the P and E sites, respectively. Catalyzes the coordinated movement of the two tRNA molecules, the mRNA and conformational changes in the ribosome. This is Elongation factor G from Chlorobium phaeovibrioides (strain DSM 265 / 1930) (Prosthecochloris vibrioformis (strain DSM 265)).